The primary structure comprises 118 residues: Non-specific lipid-transfer protein-like 1 (118 aa).

The SCP2 domain maps to 5-113; it reads SDVIFEEIKE…KLRTILDPKM (109 aa).

This Caenorhabditis elegans protein is Non-specific lipid-transfer protein-like 1 (nlt-1).